A 161-amino-acid polypeptide reads, in one-letter code: Carboxysome assembly protein CcmN (161 aa).

A disordered region spans residues 111 to 140 (LLSAETPPTTATVSSSEPAGRSPQSSAIAH). A compositionally biased stretch (polar residues) spans 116 to 137 (TPPTTATVSSSEPAGRSPQSSA). The short motif at 144-161 (VYGKEQFLRMRQSMFPDR) is the Encapsulation peptide element.

This sequence belongs to the CcmN family. As to quaternary structure, interacts with CcmM via the N-terminus of CcmN. Interacts with CcmK2 via the 18 C-terminal residues.

It is found in the carboxysome. In terms of biological role, required for carboxysome formation; the N-terminus interacts with CcmM which itself binds RuBisCO (ribulose bisphosphate carboxylase, rbcL-rbcS), while the C-terminal 18 residues interact with carboxysome shell protein CcmK2. Required for growth in normal air. Its function is as follows. Beta-carboxysome assembly initiates when soluble RuBisCO is condensed into a liquid matrix in a pre-carboxysome by the RbcS-like domains of probably both CcmM58 and CcmM35. CcmN interacts with the N-terminus of CcmM58, and then recruits the CcmK2 major shell protein via CcmN's encapsulation peptide. Shell formation requires CcmK proteins and CcmO. CcmL caps the otherwise elongated carboxysome. Once fully encapsulated carboxysomes are formed, they migrate within the cell probably via interactions with the cytoskeleton. The sequence is that of Carboxysome assembly protein CcmN from Synechococcus elongatus (strain ATCC 33912 / PCC 7942 / FACHB-805) (Anacystis nidulans R2).